The sequence spans 544 residues: Transcription factor bHLH119 (544 aa).

Disordered stretches follow at residues 12–59 and 185–208; these read NGQV…QPPR and VAST…PPSV. Polar residues predominate over residues 15-29; that stretch reads VVRTSQPQRPSSGKP. The span at 50–59 shows a compositional bias: pro residues; that stretch reads LPLPLLQPPR. Position 269 is a phosphothreonine (Thr-269). Ser-274 carries the phosphoserine modification. Disordered stretches follow at residues 342 to 364 and 522 to 544; these read QGTE…MHNL and QPPL…STSK. In terms of domain architecture, bHLH spans 357–406; it reads RAADMHNLSERRRRERINERMKTLQELLPRCRKTDKVSMLEDVIEYVKSL. Residues 522 to 535 are compositionally biased toward low complexity; that stretch reads QPPLPLQGQPTSQP. A phosphoserine mark is found at Ser-541 and Ser-543.

As to quaternary structure, homodimer.

Its subcellular location is the nucleus. This chain is Transcription factor bHLH119 (BHLH119), found in Arabidopsis thaliana (Mouse-ear cress).